The primary structure comprises 434 residues: Methylenetetrahydrofolate--tRNA-(uracil-5-)-methyltransferase TrmFO (434 aa).

9–14 (GAGLAG) provides a ligand contact to FAD.

This sequence belongs to the MnmG family. TrmFO subfamily. The cofactor is FAD.

It is found in the cytoplasm. It catalyses the reaction uridine(54) in tRNA + (6R)-5,10-methylene-5,6,7,8-tetrahydrofolate + NADH + H(+) = 5-methyluridine(54) in tRNA + (6S)-5,6,7,8-tetrahydrofolate + NAD(+). The catalysed reaction is uridine(54) in tRNA + (6R)-5,10-methylene-5,6,7,8-tetrahydrofolate + NADPH + H(+) = 5-methyluridine(54) in tRNA + (6S)-5,6,7,8-tetrahydrofolate + NADP(+). Its function is as follows. Catalyzes the folate-dependent formation of 5-methyl-uridine at position 54 (M-5-U54) in all tRNAs. This chain is Methylenetetrahydrofolate--tRNA-(uracil-5-)-methyltransferase TrmFO, found in Fusobacterium nucleatum subsp. nucleatum (strain ATCC 25586 / DSM 15643 / BCRC 10681 / CIP 101130 / JCM 8532 / KCTC 2640 / LMG 13131 / VPI 4355).